Here is a 20-residue protein sequence, read N- to C-terminus: Maximin-Ht (20 aa).

This sequence belongs to the bombinin family. In terms of tissue distribution, expressed by the skin glands.

Its subcellular location is the secreted. Has antimicrobial activity. The chain is Maximin-Ht from Bombina maxima (Giant fire-bellied toad).